The chain runs to 560 residues: Protein AATF (560 aa).

Ala-2 is subject to N-acetylalanine. Phosphoserine is present on residues Ser-61 and Ser-63. The segment at 76–208 (TSRKAWNEDH…GDRNSEDDGV (133 aa)) is disordered. Positions 94–129 (SDEEISDEEGSGDEDSEGLGLEEYDEDDLGAAEEQE) are enriched in acidic residues. Phosphoserine is present on residues Ser-150 and Ser-155. A compositionally biased stretch (basic and acidic residues) spans 156-165 (DFEKFTKGMD). Residues 168–195 (GSSEEEEDEESGMEEGDDAEDSQGESEE) are compositionally biased toward acidic residues. Ser-203, Ser-273, Ser-316, Ser-320, and Ser-321 each carry phosphoserine. The tract at residues 273-315 (SALKNSHKALKALLRSLVGLQEELLFQYPDTRYLVDGTKPNAG) is POLR2J binding. The disordered stretch occupies residues 309-333 (GTKPNAGSEEISSEDDELVEEKKQQ). An RB1 binding region spans residues 316–372 (SEEISSEDDELVEEKKQQRRRVPAKRKLEMEDYPSFMAKRFADFTVYRNRTLQKWHD). Residues 373–472 (KTKLASGKLG…FYHQLLRELI (100 aa)) are RB1 and SP1 binding.

It belongs to the AATF family. As to quaternary structure, part of the small subunit (SSU) processome, composed of more than 70 proteins and the RNA chaperone small nucleolar RNA (snoRNA) U3. Interacts with POLR2J, RB1/RB, RBL1/P107 and RBL2/P130. Interacts with PAWR and SP1. May also bind MAPT. Hyperphosphorylated during the G1/S phase transition. As to expression, ubiquitously expressed. Expressed at high levels in brain, heart, kidney, placenta and thymus.

The protein localises to the nucleus. It localises to the nucleolus. Functionally, part of the small subunit (SSU) processome, first precursor of the small eukaryotic ribosomal subunit. During the assembly of the SSU processome in the nucleolus, many ribosome biogenesis factors, an RNA chaperone and ribosomal proteins associate with the nascent pre-rRNA and work in concert to generate RNA folding, modifications, rearrangements and cleavage as well as targeted degradation of pre-ribosomal RNA by the RNA exosome. May function as a general inhibitor of the histone deacetylase HDAC1. Binding to the pocket region of RB1 may displace HDAC1 from RB1/E2F complexes, leading to activation of E2F target genes and cell cycle progression. Conversely, displacement of HDAC1 from SP1 bound to the CDKN1A promoter leads to increased expression of this CDK inhibitor and blocks cell cycle progression. Also antagonizes PAWR mediated induction of aberrant amyloid peptide production in Alzheimer disease (presenile and senile dementia), although the molecular basis for this phenomenon has not been described to date. The polypeptide is Protein AATF (Homo sapiens (Human)).